A 359-amino-acid polypeptide reads, in one-letter code: 3-dehydroquinate synthase (359 aa).

Residues 71-76, 105-109, 129-130, Lys142, and Lys151 contribute to the NAD(+) site; these read DAEAAK, GAVTD, and TT. Residues Glu184, His247, and His263 each contribute to the Zn(2+) site.

This sequence belongs to the sugar phosphate cyclases superfamily. Dehydroquinate synthase family. The cofactor is NAD(+). Co(2+) serves as cofactor. It depends on Zn(2+) as a cofactor.

The protein resides in the cytoplasm. The enzyme catalyses 7-phospho-2-dehydro-3-deoxy-D-arabino-heptonate = 3-dehydroquinate + phosphate. Its pathway is metabolic intermediate biosynthesis; chorismate biosynthesis; chorismate from D-erythrose 4-phosphate and phosphoenolpyruvate: step 2/7. Functionally, catalyzes the conversion of 3-deoxy-D-arabino-heptulosonate 7-phosphate (DAHP) to dehydroquinate (DHQ). The chain is 3-dehydroquinate synthase from Leifsonia xyli subsp. xyli (strain CTCB07).